A 364-amino-acid polypeptide reads, in one-letter code: Guanine nucleotide-binding protein alpha-8 subunit (364 aa).

G2 is lipidated: N-myristoyl glycine. C5 carries S-palmitoyl cysteine lipidation. The G-alpha domain maps to 38–364 (KILKLLILGP…QHTMQKVGIQ (327 aa)). Positions 41-54 (KLLILGPGESGKST) are G1 motif. Residues 46-53 (GPGESGKS), 186-192 (LKSRVPT), 211-215 (DVGGQ), 280-283 (NKID), and A336 each bind GTP. Mg(2+)-binding residues include S53 and T192. The interval 184–192 (DILKSRVPT) is G2 motif. The interval 207-216 (FKIFDVGGQR) is G3 motif. The G4 motif stretch occupies residues 276–283 (ILFLNKID). A G5 motif region spans residues 334 to 339 (TCATDT).

Belongs to the G-alpha family. G proteins are composed of 3 units; alpha, beta and gamma. The alpha chain contains the guanine nucleotide binding site.

Its function is as follows. Guanine nucleotide-binding proteins (G proteins) are involved as modulators or transducers in various transmembrane signaling systems. The protein is Guanine nucleotide-binding protein alpha-8 subunit (gpa-8) of Caenorhabditis briggsae.